The following is a 204-amino-acid chain: GTP cyclohydrolase 1 (204 aa).

Positions 92, 95, and 165 each coordinate Zn(2+).

Belongs to the GTP cyclohydrolase I family. In terms of assembly, homomer.

The catalysed reaction is GTP + H2O = 7,8-dihydroneopterin 3'-triphosphate + formate + H(+). It functions in the pathway cofactor biosynthesis; 7,8-dihydroneopterin triphosphate biosynthesis; 7,8-dihydroneopterin triphosphate from GTP: step 1/1. The sequence is that of GTP cyclohydrolase 1 from Mycolicibacterium paratuberculosis (strain ATCC BAA-968 / K-10) (Mycobacterium paratuberculosis).